A 344-amino-acid polypeptide reads, in one-letter code: uncharacterized protein (344 aa).

Residues 1–98 (MIDFVKSRDT…NNDEIGIWNY (98 aa)) lie on the Cytoplasmic side of the membrane. Residues 99–119 (ISVAEMGGVLLFLSYWIWTCL) traverse the membrane as a helical segment. Residue His-120 is a topological domain, lumenal. Residues 121–141 (FSKIIFPAQKVICLYIFLFAL) traverse the membrane as a helical segment. The Cytoplasmic segment spans residues 142 to 198 (NQTLQECIEEYVFSSECIKYRQFYSVYEIIDFLRTNFYRLFVIYCALGFGITRTVPK). Residues 199-219 (YLMIKGISIVIALCSVYWISL) traverse the membrane as a helical segment. The Lumenal portion of the chain corresponds to 220–222 (YKD). A helical transmembrane segment spans residues 223–243 (VYVVSEIFDMIQYEVSPAIWV). The Cytoplasmic segment spans residues 244–273 (YSICHLLKQCTSVTTYENASKARFFRRMLN). The chain crosses the membrane as a helical span at residues 274-294 (AFIFIFCASPMLHYLSNIIFG). At 295-344 (NFDYRLSVIIGDLFTFMEKIAFPCYIMFPTHNEALAYNRNVAEEAQEKMI) the chain is on the lumenal side.

This sequence belongs to the UPF0742 family.

It localises to the endoplasmic reticulum. The protein localises to the membrane. This is an uncharacterized protein from Schizosaccharomyces pombe (strain 972 / ATCC 24843) (Fission yeast).